The following is a 247-amino-acid chain: Pyridoxine 5'-phosphate synthase (247 aa).

Asn7 is a 3-amino-2-oxopropyl phosphate binding site. 9 to 10 provides a ligand contact to 1-deoxy-D-xylulose 5-phosphate; sequence DH. Position 18 (Arg18) interacts with 3-amino-2-oxopropyl phosphate. The Proton acceptor role is filled by His43. 1-deoxy-D-xylulose 5-phosphate is bound by residues Arg45 and His50. Glu70 functions as the Proton acceptor in the catalytic mechanism. Thr100 is a binding site for 1-deoxy-D-xylulose 5-phosphate. Residue His190 is the Proton donor of the active site. 3-amino-2-oxopropyl phosphate-binding positions include Gly191 and 212–213; that span reads GH.

The protein belongs to the PNP synthase family. As to quaternary structure, homooctamer; tetramer of dimers.

The protein resides in the cytoplasm. It catalyses the reaction 3-amino-2-oxopropyl phosphate + 1-deoxy-D-xylulose 5-phosphate = pyridoxine 5'-phosphate + phosphate + 2 H2O + H(+). Its pathway is cofactor biosynthesis; pyridoxine 5'-phosphate biosynthesis; pyridoxine 5'-phosphate from D-erythrose 4-phosphate: step 5/5. Catalyzes the complicated ring closure reaction between the two acyclic compounds 1-deoxy-D-xylulose-5-phosphate (DXP) and 3-amino-2-oxopropyl phosphate (1-amino-acetone-3-phosphate or AAP) to form pyridoxine 5'-phosphate (PNP) and inorganic phosphate. The sequence is that of Pyridoxine 5'-phosphate synthase from Synechococcus sp. (strain WH7803).